The primary structure comprises 426 residues: Lipoyl synthase, mitochondrial (426 aa).

Residues 1-29 constitute a mitochondrion transit peptide; it reads MASPAPLQRLQAPLRRSLARAAVLSSRTY. Over residues 27–42 the composition is skewed to polar residues; it reads RTYATIPSPSDPGLTQ. The disordered stretch occupies residues 27 to 61; sequence RTYATIPSPSDPGLTQSSPSPAASTTPAKKAPRPS. Low complexity predominate over residues 43–55; sequence SSPSPAASTTPAK. Residues Cys140, Cys145, Cys151, Cys171, Cys175, Cys178, and Ser388 each coordinate [4Fe-4S] cluster. Residues 154–377 form the Radical SAM core domain; that stretch reads GNDKSAATAT…KQRALDMGFL (224 aa).

Belongs to the radical SAM superfamily. Lipoyl synthase family. Requires [4Fe-4S] cluster as cofactor.

The protein resides in the mitochondrion. The catalysed reaction is [[Fe-S] cluster scaffold protein carrying a second [4Fe-4S](2+) cluster] + N(6)-octanoyl-L-lysyl-[protein] + 2 oxidized [2Fe-2S]-[ferredoxin] + 2 S-adenosyl-L-methionine + 4 H(+) = [[Fe-S] cluster scaffold protein] + N(6)-[(R)-dihydrolipoyl]-L-lysyl-[protein] + 4 Fe(3+) + 2 hydrogen sulfide + 2 5'-deoxyadenosine + 2 L-methionine + 2 reduced [2Fe-2S]-[ferredoxin]. It participates in protein modification; protein lipoylation via endogenous pathway; protein N(6)-(lipoyl)lysine from octanoyl-[acyl-carrier-protein]: step 2/2. Catalyzes the radical-mediated insertion of two sulfur atoms into the C-6 and C-8 positions of the octanoyl moiety bound to the lipoyl domains of lipoate-dependent enzymes, thereby converting the octanoylated domains into lipoylated derivatives. The sequence is that of Lipoyl synthase, mitochondrial from Podospora anserina (strain S / ATCC MYA-4624 / DSM 980 / FGSC 10383) (Pleurage anserina).